Here is a 565-residue protein sequence, read N- to C-terminus: uncharacterized protein (565 aa).

A run of 5 helical transmembrane segments spans residues 14–34, 36–56, 92–112, 117–137, and 157–177; these read LAIFLTLFVGFWIGKIKIGKF, LGVVTSVLLVGVLVGQLDITV, MGFAAIMCVFCLIIPWILAKI, VGEAAGLLAGSQTISAVIGVA, and IIPVSYAVTYIFGTAGSAWVL. One can recognise an RCK C-terminal domain in the interval 296–381; sequence PEVLDPQLLD…VDAAAKQLGY (86 aa). Helical transmembrane passes span 391-411, 414-434, 448-468, 481-501, 508-530, and 545-565; these read MIFVGLGILIGGLIGALSIHM, VPISLSTSGGALIGGLFFGWL, ALWILDNVGLNMFIAVVGIAA, LSLFIVGALATSIPLIAGILM, FHPALVLGCTAGARTTTAALGAI, and VTYAVGNTLLIIWGVVIVLLM.

This sequence belongs to the AAE transporter (TC 2.A.81) family.

It is found in the cell membrane. This is an uncharacterized protein from Bacteroides fragilis (strain YCH46).